Reading from the N-terminus, the 255-residue chain is 1-(5-phosphoribosyl)-5-[(5-phosphoribosylamino)methylideneamino] imidazole-4-carboxamide isomerase (255 aa).

Asp-8 (proton acceptor) is an active-site residue. Asp-129 functions as the Proton donor in the catalytic mechanism.

The protein belongs to the HisA/HisF family.

The protein resides in the cytoplasm. The catalysed reaction is 1-(5-phospho-beta-D-ribosyl)-5-[(5-phospho-beta-D-ribosylamino)methylideneamino]imidazole-4-carboxamide = 5-[(5-phospho-1-deoxy-D-ribulos-1-ylimino)methylamino]-1-(5-phospho-beta-D-ribosyl)imidazole-4-carboxamide. It functions in the pathway amino-acid biosynthesis; L-histidine biosynthesis; L-histidine from 5-phospho-alpha-D-ribose 1-diphosphate: step 4/9. In Parasynechococcus marenigrum (strain WH8102), this protein is 1-(5-phosphoribosyl)-5-[(5-phosphoribosylamino)methylideneamino] imidazole-4-carboxamide isomerase.